Here is a 399-residue protein sequence, read N- to C-terminus: Elongation factor Tu 1 (399 aa).

In terms of domain architecture, tr-type G spans 10-209 (KPHVNIGTIG…QVDTYIPEPE (200 aa)). Positions 19–26 (GHVDHGKT) are G1. Residue 19–26 (GHVDHGKT) participates in GTP binding. Residue Thr26 participates in Mg(2+) binding. The tract at residues 60-64 (GITIA) is G2. Residues 81-84 (DCPG) are G3. GTP-binding positions include 81–85 (DCPGH) and 136–139 (NKAD). The G4 stretch occupies residues 136-139 (NKAD). Residues 174-176 (SAL) form a G5 region.

This sequence belongs to the TRAFAC class translation factor GTPase superfamily. Classic translation factor GTPase family. EF-Tu/EF-1A subfamily. As to quaternary structure, monomer.

It is found in the cytoplasm. It catalyses the reaction GTP + H2O = GDP + phosphate + H(+). Functionally, GTP hydrolase that promotes the GTP-dependent binding of aminoacyl-tRNA to the A-site of ribosomes during protein biosynthesis. The sequence is that of Elongation factor Tu 1 from Syntrophotalea carbinolica (strain DSM 2380 / NBRC 103641 / GraBd1) (Pelobacter carbinolicus).